A 269-amino-acid polypeptide reads, in one-letter code: 4-hydroxy-tetrahydrodipicolinate reductase (269 aa).

Position 11–16 (11–16 (GPIGRM)) interacts with NAD(+). Lys-39 provides a ligand contact to NADP(+). Residues 101-103 (GTT) and 125-128 (ASNF) contribute to the NAD(+) site. The active-site Proton donor/acceptor is the His-158. His-159 contacts (S)-2,3,4,5-tetrahydrodipicolinate. The active-site Proton donor is the Lys-162. 168 to 169 (GT) contributes to the (S)-2,3,4,5-tetrahydrodipicolinate binding site.

It belongs to the DapB family. In terms of assembly, homotetramer.

It is found in the cytoplasm. It catalyses the reaction (S)-2,3,4,5-tetrahydrodipicolinate + NAD(+) + H2O = (2S,4S)-4-hydroxy-2,3,4,5-tetrahydrodipicolinate + NADH + H(+). The catalysed reaction is (S)-2,3,4,5-tetrahydrodipicolinate + NADP(+) + H2O = (2S,4S)-4-hydroxy-2,3,4,5-tetrahydrodipicolinate + NADPH + H(+). Its pathway is amino-acid biosynthesis; L-lysine biosynthesis via DAP pathway; (S)-tetrahydrodipicolinate from L-aspartate: step 4/4. In terms of biological role, catalyzes the conversion of 4-hydroxy-tetrahydrodipicolinate (HTPA) to tetrahydrodipicolinate. The polypeptide is 4-hydroxy-tetrahydrodipicolinate reductase (Buchnera aphidicola subsp. Acyrthosiphon pisum (strain Tuc7)).